Here is a 202-residue protein sequence, read N- to C-terminus: GTP cyclohydrolase-2 (202 aa).

48–52 (RLHSE) is a binding site for GTP. Zn(2+) is bound by residues C53, C64, and C66. Residues Q69, 91 to 93 (EGR), and T113 each bind GTP. Residue D125 is the Proton acceptor of the active site. Residue R127 is the Nucleophile of the active site. GTP-binding residues include T148 and K153.

Belongs to the GTP cyclohydrolase II family. Requires Zn(2+) as cofactor.

It catalyses the reaction GTP + 4 H2O = 2,5-diamino-6-hydroxy-4-(5-phosphoribosylamino)-pyrimidine + formate + 2 phosphate + 3 H(+). It functions in the pathway cofactor biosynthesis; riboflavin biosynthesis; 5-amino-6-(D-ribitylamino)uracil from GTP: step 1/4. Functionally, catalyzes the conversion of GTP to 2,5-diamino-6-ribosylamino-4(3H)-pyrimidinone 5'-phosphate (DARP), formate and pyrophosphate. The sequence is that of GTP cyclohydrolase-2 from Colwellia psychrerythraea (strain 34H / ATCC BAA-681) (Vibrio psychroerythus).